Consider the following 236-residue polypeptide: Ubiquinone biosynthesis O-methyltransferase (236 aa).

S-adenosyl-L-methionine-binding residues include Arg39, Gly59, Asp80, and Met124.

It belongs to the methyltransferase superfamily. UbiG/COQ3 family.

It carries out the reaction a 3-demethylubiquinol + S-adenosyl-L-methionine = a ubiquinol + S-adenosyl-L-homocysteine + H(+). It catalyses the reaction a 3-(all-trans-polyprenyl)benzene-1,2-diol + S-adenosyl-L-methionine = a 2-methoxy-6-(all-trans-polyprenyl)phenol + S-adenosyl-L-homocysteine + H(+). It participates in cofactor biosynthesis; ubiquinone biosynthesis. Functionally, O-methyltransferase that catalyzes the 2 O-methylation steps in the ubiquinone biosynthetic pathway. In Shewanella sp. (strain MR-7), this protein is Ubiquinone biosynthesis O-methyltransferase.